The chain runs to 434 residues: Probable zinc metalloprotease PTRG_04772 (434 aa).

Residue Asn88 is glycosylated (N-linked (GlcNAc...) asparagine). Residues His111, Asp131, and Glu164 each coordinate Zn(2+). N-linked (GlcNAc...) asparagine glycosylation occurs at Asn179. Position 191 (Asp191) interacts with Zn(2+). Asn220, Asn299, Asn347, Asn353, Asn390, and Asn395 each carry an N-linked (GlcNAc...) asparagine glycan. A Fibronectin type-III domain is found at 340–433 (SPTNVGINTT…LPFPFGCARN (94 aa)).

It belongs to the peptidase M28 family. M28B subfamily. Zn(2+) serves as cofactor.

Its subcellular location is the secreted. This chain is Probable zinc metalloprotease PTRG_04772, found in Pyrenophora tritici-repentis (strain Pt-1C-BFP) (Wheat tan spot fungus).